The chain runs to 232 residues: tRNA pseudouridine synthase B (232 aa).

Asp-53 serves as the catalytic Nucleophile.

This sequence belongs to the pseudouridine synthase TruB family. Type 1 subfamily.

The enzyme catalyses uridine(55) in tRNA = pseudouridine(55) in tRNA. Responsible for synthesis of pseudouridine from uracil-55 in the psi GC loop of transfer RNAs. The protein is tRNA pseudouridine synthase B of Malacoplasma penetrans (strain HF-2) (Mycoplasma penetrans).